A 927-amino-acid chain; its full sequence is Tubulin monoglycylase TTLL3 (927 aa).

Positions 35 to 47 are enriched in polar residues; sequence RSQPSELRTNFSS. 2 disordered regions span residues 35–113 and 194–227; these read RSQP…PQPV and HPPG…EENE. Residues 216-226 show a composition bias toward acidic residues; sequence DATEDEDEEEN. Residues 345-702 enclose the TTL domain; that stretch reads VLKLVVKLEE…DRRLDRSCDT (358 aa). ATP is bound by residues K476, 482-483, 514-517, 527-529, and 571-572; these read RG, QKYI, KFD, and CN. An a protein-binding site is contributed by R482. 3 residues coordinate Mg(2+): D649, E662, and N664. Position 662 (E662) interacts with ATP. Disordered regions lie at residues 735–799 and 897–927; these read VPVG…SGKG and EEGH…KTET. The segment covering 752–769 has biased composition (polar residues); the sequence is LTQQGSGESKDSGSPTHR. Residues 776-788 show a composition bias toward basic and acidic residues; sequence ARAESLEHTEKPE. The segment covering 916 to 927 has biased composition (polar residues); it reads LSSTEPCSKTET.

Requires Mg(2+) as cofactor. Highly expressed in brain and testis. Expressed in heart, kidney, liver, lung, muscle, spleen, trachea and colon. Expressed in sperm flagellum. In the brain, specifically expressed in ependymal cilia.

Its subcellular location is the cytoplasm. It is found in the cytoskeleton. The protein localises to the cell projection. It localises to the cilium. The protein resides in the cilium axoneme. Its subcellular location is the flagellum axoneme. It catalyses the reaction L-glutamyl-[protein] + glycine + ATP = glycyl-L-glutamyl-[protein] + ADP + phosphate + H(+). Monoglycylase which modifies alpha- and beta-tubulin, adding a single glycine on the gamma-carboxyl groups of specific glutamate residues to generate monoglycine side chains within the C-terminal tail of tubulin. Not involved in elongation step of the polyglycylation reaction. Preferentially glycylates a beta-tail peptide over the alpha-tail, although shifts its preference toward alpha-tail as beta-tail glutamylation increases. Competes with polyglutamylases for modification site on beta-tubulin substrate, thereby creating an anticorrelation between glycylation and glutamylation reactions. Together with TTLL8, mediates microtubule glycylation of primary and motile cilia, which is essential for their stability and maintenance. Involved in microtubule glycylation of primary cilia in colon which controls cell proliferation of epithelial cells and plays an essential role in colon cancer development. Together with TTLL8, glycylates sperm flagella which regulates axonemal dynein motor activity, thereby controlling flagellar beat, directional sperm swimming and male fertility. The chain is Tubulin monoglycylase TTLL3 from Mus musculus (Mouse).